Reading from the N-terminus, the 697-residue chain is MSQLKSSAIMDARILWPAFGGAFRKLDPRTLARNPVMFVVAIVSALTSVLFLRDLITGGGDLRFTLQIIIWLWFTVLFANFAEAVAEGRGKAQADSLRKARTETQAKLLAGEDRSKFKLVPGTSLKVGDIVLVEAGDIIPSDGEVVEGVASVNEAAITGESAPVIRESGGDRSAVTGGTQVLSDWIRVRITAAAGHTFLDRMISLVEGAERQKTPNEIALNILLVGMTLIFVLATATIPSFASYSGGYISVTVLVALFVTLIPTTIGALLSAIGIAGMDRLVRFNVLAMSGRAVEAAGDVDTLLLDKTGTITLGNRQATDFRPVKGVTEQELADAAQLASLADETPEGRSIVVLAKEKYGIRARDMATLHATFVPFTAQTRMSGVDIDGSSVRKGAVDSVLAHVNQSTVASHATRPNSDTIRDLQAIADEVAKSGGTPLAVERDGRLLGVVHLKDIVKGGIRERFAELRKMGIRTVMITGDNPMTAAAIAAEAGVDDFLAQATPEDKLKLIRDEQAKGKLVAMCGDGTNDAPALAQADVGVAMNTGTVAAREAGNMVDLDSDPTKLIEIVEIGKALLMTRGSLTTFSIANDVAKYFAIIPAMFAVFYVAPGQSTGPLQALNIMHLATPQSAILSAIIFNALIIIALIPLSLRGVKYRAIGAGALLSRNLLVYGLGGIIVPFVGIKIIDMAVTALGLA.

4 helical membrane passes run 36–56, 66–86, 218–238, and 253–273; these read VMFVVAIVSALTSVLFLRDLI, LQIIIWLWFTVLFANFAEAVA, IALNILLVGMTLIFVLATATI, and VLVALFVTLIPTTIGALLSAI. Asp-306 functions as the 4-aspartylphosphate intermediate in the catalytic mechanism. ATP contacts are provided by residues Asp-343, Glu-347, 376–383, and Lys-394; that span reads FTAQTRMS. Positions 526 and 530 each coordinate Mg(2+). 3 helical membrane passes run 595–615, 631–651, and 669–689; these read YFAIIPAMFAVFYVAPGQSTG, AILSAIIFNALIIIALIPLSL, and LLVYGLGGIIVPFVGIKIIDM.

The protein belongs to the cation transport ATPase (P-type) (TC 3.A.3) family. Type IA subfamily. As to quaternary structure, the system is composed of three essential subunits: KdpA, KdpB and KdpC.

The protein resides in the cell inner membrane. It catalyses the reaction K(+)(out) + ATP + H2O = K(+)(in) + ADP + phosphate + H(+). Part of the high-affinity ATP-driven potassium transport (or Kdp) system, which catalyzes the hydrolysis of ATP coupled with the electrogenic transport of potassium into the cytoplasm. This subunit is responsible for energy coupling to the transport system and for the release of the potassium ions to the cytoplasm. This Mesorhizobium japonicum (strain LMG 29417 / CECT 9101 / MAFF 303099) (Mesorhizobium loti (strain MAFF 303099)) protein is Potassium-transporting ATPase ATP-binding subunit.